Here is a 380-residue protein sequence, read N- to C-terminus: MAPNLRKSHPLLKMINNSLIDLPTPSNISAWWNFGSLLGICLATQILTGLLLAMHYTADTTLAFSSVTHTCRNVQYGWLIRNLHANGASFFFICIYLHIGRGLYYGSYLYKETWNTGILLLLTLMATAFVGYVLPWGQMSFWGATVITNLFSAIPYIGQTIVEWAWGGFSVDNPTLTRFFALHFLLPFVIAGLTLIHLTFLHESGSNNPLGLVSNCDKIPFHPYFSLKDILGFMLMFLSLTTLALFSPNLLGDPENFTPANPLVTPPHIKPEWYFLFAYAILRSIPNKLGGVLALAASVLMMFLSPLLHKSKQRTMAFRPLSQLLFWTLVANLFILTWVGSQPVEHPFIIIGQLASFTYFTILLILLPITGALENKMLNY.

4 helical membrane passes run 34–54 (FGSLLGICLATQILTGLLLAM), 78–99 (WLIRNLHANGASFFFICIYLHI), 114–134 (WNTGILLLLTLMATAFVGYVL), and 179–199 (FFALHFLLPFVIAGLTLIHLT). The heme b site is built by His84 and His98. Heme b-binding residues include His183 and His197. His202 is a binding site for a ubiquinone. Helical transmembrane passes span 227–247 (LKDILGFMLMFLSLTTLALFS), 289–309 (LGGVLALAASVLMMFLSPLLH), 321–341 (LSQLLFWTLVANLFILTWVGS), and 348–368 (FIIIGQLASFTYFTILLILLP).

This sequence belongs to the cytochrome b family. In terms of assembly, the cytochrome bc1 complex contains 11 subunits: 3 respiratory subunits (MT-CYB, CYC1 and UQCRFS1), 2 core proteins (UQCRC1 and UQCRC2) and 6 low-molecular weight proteins (UQCRH/QCR6, UQCRB/QCR7, UQCRQ/QCR8, UQCR10/QCR9, UQCR11/QCR10 and a cleavage product of UQCRFS1). This cytochrome bc1 complex then forms a dimer. Requires heme b as cofactor.

Its subcellular location is the mitochondrion inner membrane. In terms of biological role, component of the ubiquinol-cytochrome c reductase complex (complex III or cytochrome b-c1 complex) that is part of the mitochondrial respiratory chain. The b-c1 complex mediates electron transfer from ubiquinol to cytochrome c. Contributes to the generation of a proton gradient across the mitochondrial membrane that is then used for ATP synthesis. This Pelagodroma marina (White-faced storm-petrel) protein is Cytochrome b (MT-CYB).